Here is a 489-residue protein sequence, read N- to C-terminus: uncharacterized protein (489 aa).

This is an uncharacterized protein from Bacillus subtilis (strain 168).